The chain runs to 318 residues: Probable metal transport system membrane protein CT_070 (318 aa).

Transmembrane regions (helical) follow at residues 1-21 (MVAS…LVFF), 39-59 (IQVI…TFLV), 64-84 (AMYA…VCLF), 94-114 (QALT…IHFI), 124-144 (ASTA…LVFL), 170-190 (IFLV…SFVC), 196-216 (IFAF…MLLL), 226-246 (AVGV…AKLI), 252-272 (EMMV…PALS), and 285-305 (TSGL…VFVC).

The protein belongs to the ABC-3 integral membrane protein family.

It is found in the cell inner membrane. Its function is as follows. Part of an ATP-driven transport system CT_067/CT_068/CT_069/CT_070 for a metal. The polypeptide is Probable metal transport system membrane protein CT_070 (Chlamydia trachomatis serovar D (strain ATCC VR-885 / DSM 19411 / UW-3/Cx)).